Consider the following 297-residue polypeptide: Homoserine kinase (297 aa).

82 to 92 (PLTRGLGSSAS) provides a ligand contact to ATP.

Belongs to the GHMP kinase family. Homoserine kinase subfamily.

It localises to the cytoplasm. The enzyme catalyses L-homoserine + ATP = O-phospho-L-homoserine + ADP + H(+). The protein operates within amino-acid biosynthesis; L-threonine biosynthesis; L-threonine from L-aspartate: step 4/5. Catalyzes the ATP-dependent phosphorylation of L-homoserine to L-homoserine phosphate. This chain is Homoserine kinase, found in Bacillus anthracis (strain CDC 684 / NRRL 3495).